The sequence spans 139 residues: Trafficking protein particle complex subunit 2-like protein (139 aa).

It belongs to the TRAPP small subunits family. Sedlin subfamily. As to quaternary structure, component of the multisubunit TRAPP (transport protein particle) complex, which includes at least TRAPPC2, TRAPPC2L, TRAPPC3, TRAPPC3L, TRAPPC4, TRAPPC5, TRAPPC8, TRAPPC9, TRAPPC10, TRAPPC11 and TRAPPC12. Interacts with the heterodimer TRAPPC3-TRAPPC6A.

The protein resides in the cytoplasm. Its subcellular location is the perinuclear region. It is found in the endoplasmic reticulum. It localises to the golgi apparatus. Functionally, may play a role in vesicular transport from endoplasmic reticulum to Golgi. The protein is Trafficking protein particle complex subunit 2-like protein (Trappc2l) of Rattus norvegicus (Rat).